The chain runs to 329 residues: MATGQKLMRAVRVFEFGGPEVLKLQSDIAVPIPKDHQALIKVHACGVNPVETYIRSGTYSRKPLLPYTPGSDVAGVIEAVGGNASAFKKGDRVFTSSTISGGYAEYALAADHTVYKLPEKLDFKQGAAIGIPYFTAYRALIHSAHVKAGESVLVHGASGGVGLAACQIARAYGLKVLGTAGTEEGQKIVLQNGAHEVFNHREVNYIDKIKKYVGEKGIDVIIEMLANVNLNKDLSLLSHGGQVIVVGSRGTIEINPRDTMAKESSIIGVTVFSSTKEEFQQYAAALQAGMEIGWLKPVIGSQYPLEKVAEAHENIIHGSGATGKMILLL.

Residue Ala-2 is modified to N-acetylalanine. An N6-acetyllysine modification is found at Lys-23. NADP(+) contacts are provided by residues Tyr-53, 158-161 (SGGV), Gly-181, His-200, Asn-229, 246-249 (VGSR), and 269-271 (VTV). At Ser-248 the chain carries Phosphoserine. Lys-296 bears the N6-succinyllysine mark.

This sequence belongs to the zinc-containing alcohol dehydrogenase family. Quinone oxidoreductase subfamily. Homotetramer.

Its subcellular location is the cytoplasm. It catalyses the reaction 2 a quinone + NADPH + H(+) = 2 a 1,4-benzosemiquinone + NADP(+). Functionally, does not have alcohol dehydrogenase activity. Binds NADP and acts through a one-electron transfer process. Orthoquinones, such as 1,2-naphthoquinone or 9,10-phenanthrenequinone, are the best substrates (in vitro). May act in the detoxification of xenobiotics. Interacts with (AU)-rich elements (ARE) in the 3'-UTR of target mRNA species and enhances their stability. NADPH binding interferes with mRNA binding. The protein is Quinone oxidoreductase (CRYZ) of Pongo abelii (Sumatran orangutan).